Consider the following 248-residue polypeptide: Amphiregulin (248 aa).

The signal sequence occupies residues Met-1–Ala-26. A propeptide spanning residues Leu-27–Gln-99 is cleaved from the precursor. Disordered regions lie at residues Leu-29–Gly-48, Val-57–Ser-77, and Val-100–Lys-136. A compositionally biased stretch (polar residues) spans Ser-58–Ser-70. A compositionally biased stretch (basic and acidic residues) spans Val-100 to Lys-116. An N-linked (GlcNAc...) asparagine glycan is attached at Asn-106. The segment covering Pro-117–Lys-136 has biased composition (basic residues). Residues Lys-135–Gly-175 enclose the EGF-like domain. Disulfide bonds link Cys-139–Cys-152, Cys-147–Cys-163, and Cys-165–Cys-174. The helical transmembrane segment at Ile-192 to Ile-215 threads the bilayer. Asn-241 is a glycosylation site (N-linked (GlcNAc...) asparagine).

This sequence belongs to the amphiregulin family. The immature precursor interacts with CNIH.

It localises to the membrane. Ligand of the EGF receptor/EGFR. Autocrine growth factor as well as a mitogen for a broad range of target cells including astrocytes, Schwann cells and fibroblasts. This chain is Amphiregulin (Areg), found in Mus musculus (Mouse).